Here is a 567-residue protein sequence, read N- to C-terminus: Dihydroxy-acid dehydratase 2 (567 aa).

C56 serves as a coordination point for [2Fe-2S] cluster. D88 is a binding site for Mg(2+). Position 129 (C129) interacts with [2Fe-2S] cluster. 2 residues coordinate Mg(2+): D130 and K131. Residue K131 is modified to N6-carboxylysine. C206 is a binding site for [2Fe-2S] cluster. E457 provides a ligand contact to Mg(2+). S483 acts as the Proton acceptor in catalysis.

Belongs to the IlvD/Edd family. In terms of assembly, homodimer. [2Fe-2S] cluster is required as a cofactor. It depends on Mg(2+) as a cofactor.

The catalysed reaction is (2R)-2,3-dihydroxy-3-methylbutanoate = 3-methyl-2-oxobutanoate + H2O. It catalyses the reaction (2R,3R)-2,3-dihydroxy-3-methylpentanoate = (S)-3-methyl-2-oxopentanoate + H2O. Its pathway is amino-acid biosynthesis; L-isoleucine biosynthesis; L-isoleucine from 2-oxobutanoate: step 3/4. It participates in amino-acid biosynthesis; L-valine biosynthesis; L-valine from pyruvate: step 3/4. In terms of biological role, functions in the biosynthesis of branched-chain amino acids. Catalyzes the dehydration of (2R,3R)-2,3-dihydroxy-3-methylpentanoate (2,3-dihydroxy-3-methylvalerate) into 2-oxo-3-methylpentanoate (2-oxo-3-methylvalerate) and of (2R)-2,3-dihydroxy-3-methylbutanoate (2,3-dihydroxyisovalerate) into 2-oxo-3-methylbutanoate (2-oxoisovalerate), the penultimate precursor to L-isoleucine and L-valine, respectively. The sequence is that of Dihydroxy-acid dehydratase 2 from Corynebacterium efficiens (strain DSM 44549 / YS-314 / AJ 12310 / JCM 11189 / NBRC 100395).